A 122-amino-acid chain; its full sequence is Large ribosomal subunit protein bL19c (122 aa).

It belongs to the bacterial ribosomal protein bL19 family.

It is found in the plastid. The protein resides in the chloroplast. This Gracilaria tenuistipitata var. liui (Red alga) protein is Large ribosomal subunit protein bL19c.